Here is a 512-residue protein sequence, read N- to C-terminus: 2,3-bisphosphoglycerate-independent phosphoglycerate mutase (512 aa).

Aspartate 12 and serine 62 together coordinate Mn(2+). Catalysis depends on serine 62, which acts as the Phosphoserine intermediate. Substrate is bound by residues histidine 123, 153–154, arginine 185, arginine 191, 260–263, and lysine 333; these read RD and RPDR. Aspartate 400, histidine 404, aspartate 441, histidine 442, and histidine 460 together coordinate Mn(2+).

Belongs to the BPG-independent phosphoglycerate mutase family. As to quaternary structure, monomer. Mn(2+) is required as a cofactor.

It catalyses the reaction (2R)-2-phosphoglycerate = (2R)-3-phosphoglycerate. It functions in the pathway carbohydrate degradation; glycolysis; pyruvate from D-glyceraldehyde 3-phosphate: step 3/5. Functionally, catalyzes the interconversion of 2-phosphoglycerate and 3-phosphoglycerate. In Clostridium perfringens (strain SM101 / Type A), this protein is 2,3-bisphosphoglycerate-independent phosphoglycerate mutase.